The primary structure comprises 243 residues: Small ribosomal subunit protein uS5 (243 aa).

Positions 1–54 (MSDNEKETQVAEETQNTQATAESSNNDERRGRRNNRGGEGRRGDRRGRREDNHE) are disordered. The span at 11-24 (AEETQNTQATAESS) shows a compositional bias: polar residues. A compositionally biased stretch (basic and acidic residues) spans 26-54 (NDERRGRRNNRGGEGRRGDRRGRREDNHE). Positions 57–120 (MLDRVVTINR…LDAKKHLFNV (64 aa)) constitute an S5 DRBM domain.

The protein belongs to the universal ribosomal protein uS5 family. Part of the 30S ribosomal subunit. Contacts proteins S4 and S8.

Functionally, with S4 and S12 plays an important role in translational accuracy. Located at the back of the 30S subunit body where it stabilizes the conformation of the head with respect to the body. This is Small ribosomal subunit protein uS5 from Bifidobacterium animalis subsp. lactis (strain AD011).